The following is a 344-amino-acid chain: DNA-directed RNA polymerase subunit alpha (344 aa).

An alpha N-terminal domain (alpha-NTD) region spans residues 1–238 (MKVIKTAPLI…KQLGVFGERP (238 aa)). An alpha C-terminal domain (alpha-CTD) region spans residues 253–344 (DAKDLSAKIE…EKLEDKGGND (92 aa)).

The protein belongs to the RNA polymerase alpha chain family. In terms of assembly, homodimer. The RNAP catalytic core consists of 2 alpha, 1 beta, 1 beta' and 1 omega subunit. When a sigma factor is associated with the core the holoenzyme is formed, which can initiate transcription.

It carries out the reaction RNA(n) + a ribonucleoside 5'-triphosphate = RNA(n+1) + diphosphate. In terms of biological role, DNA-dependent RNA polymerase catalyzes the transcription of DNA into RNA using the four ribonucleoside triphosphates as substrates. The chain is DNA-directed RNA polymerase subunit alpha from Helicobacter pylori (strain HPAG1).